Here is a 272-residue protein sequence, read N- to C-terminus: 3-methyl-2-oxobutanoate hydroxymethyltransferase (272 aa).

Residues Asp-52 and Asp-91 each coordinate Mg(2+). Residues 52 to 53, Asp-91, and Lys-121 contribute to the 3-methyl-2-oxobutanoate site; that span reads DS. Position 123 (Glu-123) interacts with Mg(2+). Glu-190 (proton acceptor) is an active-site residue.

The protein belongs to the PanB family. As to quaternary structure, homodecamer; pentamer of dimers. It depends on Mg(2+) as a cofactor.

It is found in the cytoplasm. The enzyme catalyses 3-methyl-2-oxobutanoate + (6R)-5,10-methylene-5,6,7,8-tetrahydrofolate + H2O = 2-dehydropantoate + (6S)-5,6,7,8-tetrahydrofolate. It functions in the pathway cofactor biosynthesis; (R)-pantothenate biosynthesis; (R)-pantoate from 3-methyl-2-oxobutanoate: step 1/2. Functionally, catalyzes the reversible reaction in which hydroxymethyl group from 5,10-methylenetetrahydrofolate is transferred onto alpha-ketoisovalerate to form ketopantoate. This Flavobacterium johnsoniae (strain ATCC 17061 / DSM 2064 / JCM 8514 / BCRC 14874 / CCUG 350202 / NBRC 14942 / NCIMB 11054 / UW101) (Cytophaga johnsonae) protein is 3-methyl-2-oxobutanoate hydroxymethyltransferase.